The primary structure comprises 692 residues: Bifunctional uridylyltransferase/uridylyl-removing enzyme (692 aa).

The uridylyltransferase stretch occupies residues 1-270 (MNNPAQLRQD…FAFRNASRRP (270 aa)). The uridylyl-removing stretch occupies residues 271-692 (LDLDVVDANG…RSVVRSLAGS (422 aa)). Positions 383–484 (IDEHSLNTVA…DKLLDAVRYD (102 aa)) constitute an HD domain.

This sequence belongs to the GlnD family. Requires Mg(2+) as cofactor.

The enzyme catalyses [protein-PII]-L-tyrosine + UTP = [protein-PII]-uridylyl-L-tyrosine + diphosphate. The catalysed reaction is [protein-PII]-uridylyl-L-tyrosine + H2O = [protein-PII]-L-tyrosine + UMP + H(+). Uridylyltransferase (UTase) activity is inhibited by glutamine, while glutamine activates uridylyl-removing (UR) activity. Modifies, by uridylylation and deuridylylation, the PII regulatory proteins (GlnB and homologs), in response to the nitrogen status of the cell that GlnD senses through the glutamine level. Under low glutamine levels, catalyzes the conversion of the PII proteins and UTP to PII-UMP and PPi, while under higher glutamine levels, GlnD hydrolyzes PII-UMP to PII and UMP (deuridylylation). Thus, controls uridylylation state and activity of the PII proteins, and plays an important role in the regulation of nitrogen assimilation and metabolism. The protein is Bifunctional uridylyltransferase/uridylyl-removing enzyme (glnD) of Corynebacterium glutamicum (strain ATCC 13032 / DSM 20300 / JCM 1318 / BCRC 11384 / CCUG 27702 / LMG 3730 / NBRC 12168 / NCIMB 10025 / NRRL B-2784 / 534).